We begin with the raw amino-acid sequence, 208 residues long: N-(5'-phosphoribosyl)anthranilate isomerase (208 aa).

Belongs to the TrpF family.

The catalysed reaction is N-(5-phospho-beta-D-ribosyl)anthranilate = 1-(2-carboxyphenylamino)-1-deoxy-D-ribulose 5-phosphate. It participates in amino-acid biosynthesis; L-tryptophan biosynthesis; L-tryptophan from chorismate: step 3/5. The chain is N-(5'-phosphoribosyl)anthranilate isomerase from Methanococcus vannielii (strain ATCC 35089 / DSM 1224 / JCM 13029 / OCM 148 / SB).